Consider the following 357-residue polypeptide: Uroporphyrinogen decarboxylase (357 aa).

Residues 27–31 (RQAGR), D77, Y154, T209, and H327 contribute to the substrate site.

It belongs to the uroporphyrinogen decarboxylase family. As to quaternary structure, homodimer.

Its subcellular location is the cytoplasm. The catalysed reaction is uroporphyrinogen III + 4 H(+) = coproporphyrinogen III + 4 CO2. Its pathway is porphyrin-containing compound metabolism; protoporphyrin-IX biosynthesis; coproporphyrinogen-III from 5-aminolevulinate: step 4/4. Its function is as follows. Catalyzes the decarboxylation of four acetate groups of uroporphyrinogen-III to yield coproporphyrinogen-III. The chain is Uroporphyrinogen decarboxylase from Proteus mirabilis (strain HI4320).